We begin with the raw amino-acid sequence, 944 residues long: Weak acid resistance protein 1 (944 aa).

A DNA-binding region (zn(2)-C6 fungal-type) is located at residues 76–109; the sequence is CVCCHSLKQKCEPSDVNDIYRKPCRRCLKHKKLC. Disordered regions lie at residues 114–171 and 197–225; these read SKRT…AKQF and SYGA…SVPT. At T128 the chain carries Phosphothreonine. 2 stretches are compositionally biased toward polar residues: residues 135-144 and 205-225; these read VNVSTKSKGP and TTST…SVPT.

Homodimer. Phosphorylation is required for PDR12 induction.

It is found in the nucleus. Its function is as follows. transcription factor which binds to a weak acid response element (WARE) to mediate stress induction of PDR12 and FUN34, encoding an acid transporter and a putative ammonia transporter, respectively. This chain is Weak acid resistance protein 1 (WAR1), found in Saccharomyces cerevisiae (strain ATCC 204508 / S288c) (Baker's yeast).